The chain runs to 339 residues: tRNA N6-adenosine threonylcarbamoyltransferase (339 aa).

Fe cation is bound by residues H107 and H111. Substrate-binding positions include 129-133 (LVSGG), D162, G175, and N279. D307 provides a ligand contact to Fe cation.

Belongs to the KAE1 / TsaD family. Fe(2+) serves as cofactor.

It is found in the cytoplasm. The catalysed reaction is L-threonylcarbamoyladenylate + adenosine(37) in tRNA = N(6)-L-threonylcarbamoyladenosine(37) in tRNA + AMP + H(+). Its function is as follows. Required for the formation of a threonylcarbamoyl group on adenosine at position 37 (t(6)A37) in tRNAs that read codons beginning with adenine. Is involved in the transfer of the threonylcarbamoyl moiety of threonylcarbamoyl-AMP (TC-AMP) to the N6 group of A37, together with TsaE and TsaB. TsaD likely plays a direct catalytic role in this reaction. The polypeptide is tRNA N6-adenosine threonylcarbamoyltransferase (Campylobacter curvus (strain 525.92)).